We begin with the raw amino-acid sequence, 280 residues long: CAG pathogenicity island protein 12 (280 aa).

Positions 1-20 (MKLRASVLIGATILCLILSA) are cleaved as a signal peptide. The N-palmitoyl cysteine moiety is linked to residue Cys21. Cys21 is lipidated: S-diacylglycerol cysteine.

It is found in the cell membrane. This Helicobacter pylori (strain ATCC 700392 / 26695) (Campylobacter pylori) protein is CAG pathogenicity island protein 12 (cagT).